The sequence spans 385 residues: tRNA pseudouridine synthase D (385 aa).

The Nucleophile role is filled by Asp86. Residues 165–305 enclose the TRUD domain; it reads GFPNYFGNQR…TRFLQKDIAP (141 aa).

The protein belongs to the pseudouridine synthase TruD family.

It carries out the reaction uridine(13) in tRNA = pseudouridine(13) in tRNA. Responsible for synthesis of pseudouridine from uracil-13 in transfer RNAs. The protein is tRNA pseudouridine synthase D of Helicobacter hepaticus (strain ATCC 51449 / 3B1).